A 316-amino-acid polypeptide reads, in one-letter code: Cytochrome c biogenesis protein CcsA (316 aa).

8 helical membrane passes run 19–39 (VLTL…FSFW), 47–67 (SSIV…QLVF), 77–97 (ISNL…IQLL), 106–126 (LIQA…SFVL), 151–171 (VIMC…VVLL), 224–244 (TITF…VWAN), 258–275 (TWAF…HTRL), and 285–305 (AIIA…VNFL).

It belongs to the CcmF/CycK/Ccl1/NrfE/CcsA family. In terms of assembly, may interact with ccs1.

The protein localises to the cellular thylakoid membrane. Its function is as follows. Required during biogenesis of c-type cytochromes (cytochrome c6 and cytochrome f) at the step of heme attachment. This is Cytochrome c biogenesis protein CcsA from Prochlorococcus marinus (strain SARG / CCMP1375 / SS120).